The sequence spans 102 residues: MTTTSSKVAIKPLEDRIVVQPLDAEQTTASGLVIPDTAKEKPQEGVVLAVGPGRFEDGNRLPLDVSVGDVVLYSKYGGTEVKYNGEEYLVLSARDVLAIVEK.

The protein belongs to the GroES chaperonin family. Heptamer of 7 subunits arranged in a ring. Interacts with the chaperonin GroEL.

It localises to the cytoplasm. Its function is as follows. Together with the chaperonin GroEL, plays an essential role in assisting protein folding. The GroEL-GroES system forms a nano-cage that allows encapsulation of the non-native substrate proteins and provides a physical environment optimized to promote and accelerate protein folding. GroES binds to the apical surface of the GroEL ring, thereby capping the opening of the GroEL channel. The chain is Co-chaperonin GroES from Streptomyces coelicolor (strain ATCC BAA-471 / A3(2) / M145).